A 124-amino-acid chain; its full sequence is Large ribosomal subunit protein bL12 (124 aa).

It belongs to the bacterial ribosomal protein bL12 family. As to quaternary structure, homodimer. Part of the ribosomal stalk of the 50S ribosomal subunit. Forms a multimeric L10(L12)X complex, where L10 forms an elongated spine to which 2 to 4 L12 dimers bind in a sequential fashion. Binds GTP-bound translation factors.

Its function is as follows. Forms part of the ribosomal stalk which helps the ribosome interact with GTP-bound translation factors. Is thus essential for accurate translation. The protein is Large ribosomal subunit protein bL12 of Borreliella afzelii (strain PKo) (Borrelia afzelii).